The sequence spans 814 residues: Putative serine/threonine-protein kinase-like protein CCR3 (814 aa).

An N-terminal signal peptide occupies residues 1–30; it reads MKRFINSTVTFSVTVTIAVIIFFLLSPVTS. N-linked (GlcNAc...) asparagine glycosylation is found at Asn-6, Asn-68, Asn-136, Asn-215, Asn-226, Asn-251, Asn-260, Asn-275, Asn-299, and Asn-309. At 31 to 393 the chain is on the extracellular side; the sequence is LGSGSTYAVV…SSPPSKALTR (363 aa). Pro residues predominate over residues 366–381; sequence SQFPLPPPPPPPPPSP. The tract at residues 366–388 is disordered; sequence SQFPLPPPPPPPPPSPSTSSPPS. A helical membrane pass occupies residues 394 to 414; that stretch reads GLLAFAIVGSVGAFAGICSVV. The Cytoplasmic segment spans residues 415 to 814; that stretch reads YCLWTGVCLG…SSGICSIVSD (400 aa). Residues 433–478 form a disordered region; sequence QPTITRGGSNSRSNSSNSRSLSIRRQGSRMLSMRRQRSGTSSMKHA. Positions 441–457 are enriched in low complexity; that stretch reads SNSRSNSSNSRSLSIRR. A Protein kinase domain is found at 496–794; sequence FSLENKIGSG…DIVGNLERAL (299 aa). ATP is bound by residues 502 to 510 and Lys-524; that span reads IGSGSFGVV. The Proton acceptor role is filled by Asp-631.

It belongs to the protein kinase superfamily. Ser/Thr protein kinase family. In terms of assembly, homodimer. As to expression, expressed in roots, leaves, shoot apical meristems (SAM), and floral buds.

Its subcellular location is the membrane. The enzyme catalyses L-seryl-[protein] + ATP = O-phospho-L-seryl-[protein] + ADP + H(+). The catalysed reaction is L-threonyl-[protein] + ATP = O-phospho-L-threonyl-[protein] + ADP + H(+). Serine/threonine-protein kinase. This chain is Putative serine/threonine-protein kinase-like protein CCR3 (CCR3), found in Arabidopsis thaliana (Mouse-ear cress).